A 250-amino-acid chain; its full sequence is 2,5-dichloro-2,5-cyclohexadiene-1,4-diol dehydrogenase (250 aa).

An NAD(+)-binding site is contributed by 9-34; that stretch reads IIVTGGGSGIGRATVELLVASGANVA. Residue Ser-141 coordinates substrate. Catalysis depends on Tyr-154, which acts as the Proton acceptor.

It belongs to the short-chain dehydrogenases/reductases (SDR) family.

It carries out the reaction 2,5-dichlorocyclohexa-2,5-dien-1,4-diol + NAD(+) = 2,5-dichlorohydroquinone + NADH + H(+). The protein operates within xenobiotic degradation; gamma-hexachlorocyclohexane degradation. Its function is as follows. Catalyzes the dehydrogenation of 2,5-dichloro-2,5-cyclohexadiene-1,4-diol (2,5-DDOL) to 2,5-dichlorohydroquinone (2,5-DCHQ), a step in the degradation of gamma-hexachlorocyclohexane (gamma-HCH or lindane). Has an essential role in this assimilation pathway that allows S.japonicum UT26 to grow on gamma-HCH as the sole source of carbon and energy. The chain is 2,5-dichloro-2,5-cyclohexadiene-1,4-diol dehydrogenase from Sphingobium indicum (strain DSM 16413 / CCM 7287 / MTCC 6362 / UT26 / NBRC 101211 / UT26S) (Sphingobium japonicum).